Consider the following 368-residue polypeptide: Cytoskeleton protein RodZ (368 aa).

Residues 1 to 111 are Cytoplasmic-facing; sequence MNTEASQDQT…LGKKHKKRDG (111 aa). The HTH cro/C1-type domain maps to 19-79; sequence LRQARESLGL…KLVHLPEDEL (61 aa). Positions 30-49 form a DNA-binding region, H-T-H motif; it reads QQTVAERLCLKVSTIRDIEE. A helical; Signal-anchor for type II membrane protein transmembrane segment spans residues 112–132; sequence WLMSFTWLIVLVVLGLTGAWW. Residues 133 to 368 lie on the Periplasmic side of the membrane; sequence WQNHQAQQAE…RVARLTVGVE (236 aa). A disordered region spans residues 151–243; that stretch reads SAQLSQNGGQ…STEPVDTANT (93 aa). A compositionally biased stretch (low complexity) spans 193–221; sequence STSAVTNSATTSSATTSSVPTTSSVPKTT. Positions 229–243 are enriched in polar residues; it reads VPKTNSTEPVDTANT.

Belongs to the RodZ family.

It is found in the cell inner membrane. Its function is as follows. Cytoskeletal protein that is involved in cell-shape control through regulation of the length of the long axis. This Yersinia pseudotuberculosis serotype O:3 (strain YPIII) protein is Cytoskeleton protein RodZ.